Consider the following 120-residue polypeptide: Movement protein TGB2 (120 aa).

Over 1–16 the chain is Cytoplasmic; the sequence is MSSTSEPTYQLAPPDS. A helical transmembrane segment spans residues 17–37; the sequence is LKQVYLTLAAGFAVGLGIFLL. Over 38 to 76 the chain is Lumenal; it reads RTNTLPHTGDNIHHLPHGGCYRDGTKSIRYNSPGVATSS. The helical transmembrane segment at 77 to 97 threads the bilayer; it reads NIFLPAVAVLCILALLHVPFF. The Cytoplasmic portion of the chain corresponds to 98–120; sequence QPDRVRRRCCRFYWCADPHHPTV.

This sequence belongs to the Tymovirales TGBp2 protein family.

The protein resides in the host endoplasmic reticulum membrane. In terms of biological role, plays a role in viral cell-to-cell propagation, by facilitating genome transport to neighboring plant cells through plasmosdesmata,. In Lolium latent virus (isolate Lolium/USA/US1/-) (LoLV), this protein is Movement protein TGB2 (ORF3).